A 202-amino-acid polypeptide reads, in one-letter code: ATP-dependent Clp protease proteolytic subunit (202 aa).

Ser-106 serves as the catalytic Nucleophile. His-131 is an active-site residue.

The protein belongs to the peptidase S14 family. Fourteen ClpP subunits assemble into 2 heptameric rings which stack back to back to give a disk-like structure with a central cavity, resembling the structure of eukaryotic proteasomes.

The protein localises to the cytoplasm. It carries out the reaction Hydrolysis of proteins to small peptides in the presence of ATP and magnesium. alpha-casein is the usual test substrate. In the absence of ATP, only oligopeptides shorter than five residues are hydrolyzed (such as succinyl-Leu-Tyr-|-NHMec, and Leu-Tyr-Leu-|-Tyr-Trp, in which cleavage of the -Tyr-|-Leu- and -Tyr-|-Trp bonds also occurs).. In terms of biological role, cleaves peptides in various proteins in a process that requires ATP hydrolysis. Has a chymotrypsin-like activity. Plays a major role in the degradation of misfolded proteins. The protein is ATP-dependent Clp protease proteolytic subunit of Methylibium petroleiphilum (strain ATCC BAA-1232 / LMG 22953 / PM1).